Consider the following 513-residue polypeptide: Bifunctional pantoate ligase/cytidylate kinase (513 aa).

Residues 1 to 282 (MGTFHRLTTT…VGQTRLIDNC (282 aa)) are pantoate--beta-alanine ligase. 32–39 (MGALHGGH) is an ATP binding site. The active-site Proton donor is His39. Residue Gln63 coordinates (R)-pantoate. Gln63 lines the beta-alanine pocket. 152–155 (GQKD) is an ATP binding site. Gln158 lines the (R)-pantoate pocket. Residues Val181 and 189–192 (LSSR) each bind ATP. The cytidylate kinase stretch occupies residues 283-513 (LLDRRRPILA…HLYRSRFPQP (231 aa)).

In the N-terminal section; belongs to the pantothenate synthetase family. It in the C-terminal section; belongs to the cytidylate kinase family. Type 1 subfamily.

The protein localises to the cytoplasm. The enzyme catalyses (R)-pantoate + beta-alanine + ATP = (R)-pantothenate + AMP + diphosphate + H(+). The catalysed reaction is CMP + ATP = CDP + ADP. It carries out the reaction dCMP + ATP = dCDP + ADP. It functions in the pathway cofactor biosynthesis; (R)-pantothenate biosynthesis; (R)-pantothenate from (R)-pantoate and beta-alanine: step 1/1. In terms of biological role, catalyzes the condensation of pantoate with beta-alanine in an ATP-dependent reaction via a pantoyl-adenylate intermediate. Its function is as follows. Catalyzes the transfer of a phosphate group from ATP to either CMP or dCMP to form CDP or dCDP and ADP, respectively. The sequence is that of Bifunctional pantoate ligase/cytidylate kinase from Thermosynechococcus vestitus (strain NIES-2133 / IAM M-273 / BP-1).